The sequence spans 888 residues: G-protein coupled receptor family C group 6 member A (888 aa).

The first 15 residues, 1 to 15 (MALLMTCFVIVFAAS), serve as a signal peptide directing secretion. Residues 16 to 568 (QPCQTPDDLV…KEMEYLDSLA (553 aa)) are Extracellular-facing. Asparagine 251, asparagine 322, asparagine 532, and asparagine 544 each carry an N-linked (GlcNAc...) asparagine glycan. The helical transmembrane segment at 569 to 589 (ILLLALSLLGILFVLAIGIIF) threads the bilayer. At 590 to 604 (TRNLNTPVVKSSGEL) the chain is on the cytoplasmic side. The helical transmembrane segment at 605 to 625 (MVRYVILFCHFLNFAGTGFFI) threads the bilayer. At 626 to 641 (REPQSFTCKTRQTLIC) the chain is on the extracellular side. The chain crosses the membrane as a helical span at residues 642–662 (MSFTLCISYILMKSLKILLAF). The Cytoplasmic segment spans residues 663–676 (SSKLQNFLKCFYKP). The chain crosses the membrane as a helical span at residues 677–697 (IPIIFTCTGIVVVCTLLIFAA). Residues 698–718 (PAVGQNVSLPRVIIFECEEGS) lie on the Extracellular side of the membrane. A helical membrane pass occupies residues 719–739 (ILAFGSMLGYAAILAFMCFIC). Residues 740–754 (AFKGRKFPENYNEAK) are Cytoplasmic-facing. A helical transmembrane segment spans residues 755–775 (FITFGMLIYFIAWITFIPIYT). Topologically, residues 776 to 779 (FGKY) are extracellular. Residues 780 to 800 (MLVVEIIIILISNYGICCMFF) form a helical membrane-spanning segment. Residues 801 to 888 (PKCYVILSKQ…ALPPKRISSI (88 aa)) are Cytoplasmic-facing.

Belongs to the G-protein coupled receptor 3 family. In terms of assembly, homodimer; disulfide-linked.

Its subcellular location is the cell membrane. In terms of biological role, receptor activated by multiple ligands, including osteocalcin (BGLAP), basic amino acids, and various cations. Activated by amino acids with a preference for basic amino acids such as L-Lys, L-Arg and L-ornithine but also by small and polar amino acids. The L-alpha amino acids respond is augmented by divalent cations Ca(2+) and Mg(2+). Seems to act through a G(q)/G(11) and G(i)-coupled pathway. Regulates testosterone production by acting as a ligand for uncarboxylated osteocalcin hormone: osteocalcin-binding at the surface of Leydig cells initiates a signaling response that promotes the expression of enzymes required for testosterone synthesis in a CREB-dependent manner. Mediates the non-genomic effects of androgens in multiple tissue. May coordinate nutritional and hormonal anabolic signals through the sensing of extracellular amino acids, osteocalcin, divalent ions and its responsiveness to anabolic steroids. The protein is G-protein coupled receptor family C group 6 member A (GPRC6A) of Bos taurus (Bovine).